The primary structure comprises 194 residues: Holliday junction branch migration complex subunit RuvA (194 aa).

Residues 1-64 (MIGRITGLLL…EDVHLLFGFM (64 aa)) form a domain I region. The domain II stretch occupies residues 65 to 140 (TEQERALFRQ…KIDPVAILSE (76 aa)). Positions 140-143 (EAGA) are flexible linker. The domain III stretch occupies residues 144–194 (AASNVDKDILSALLALGYNGREVNRALEQLSEGVTVSDGIMQSLKFLSKVK).

Belongs to the RuvA family. In terms of assembly, homotetramer. Forms an RuvA(8)-RuvB(12)-Holliday junction (HJ) complex. HJ DNA is sandwiched between 2 RuvA tetramers; dsDNA enters through RuvA and exits via RuvB. An RuvB hexamer assembles on each DNA strand where it exits the tetramer. Each RuvB hexamer is contacted by two RuvA subunits (via domain III) on 2 adjacent RuvB subunits; this complex drives branch migration. In the full resolvosome a probable DNA-RuvA(4)-RuvB(12)-RuvC(2) complex forms which resolves the HJ.

It localises to the cytoplasm. Its function is as follows. The RuvA-RuvB-RuvC complex processes Holliday junction (HJ) DNA during genetic recombination and DNA repair, while the RuvA-RuvB complex plays an important role in the rescue of blocked DNA replication forks via replication fork reversal (RFR). RuvA specifically binds to HJ cruciform DNA, conferring on it an open structure. The RuvB hexamer acts as an ATP-dependent pump, pulling dsDNA into and through the RuvAB complex. HJ branch migration allows RuvC to scan DNA until it finds its consensus sequence, where it cleaves and resolves the cruciform DNA. The chain is Holliday junction branch migration complex subunit RuvA from Nitrosomonas eutropha (strain DSM 101675 / C91 / Nm57).